The chain runs to 372 residues: GTPase Obg (372 aa).

Positions 1–159 constitute an Obg domain; sequence MKFIDEARIE…RMLKLELKVL (159 aa). Residues 128–147 form a disordered region; the sequence is LHFKSSTNRAPRQKTDGKPG. One can recognise an OBG-type G domain in the interval 160–334; the sequence is ADVGLLGMPN…LVYAIYDYLA (175 aa). GTP is bound by residues 166 to 173, 191 to 195, 213 to 216, 284 to 287, and 315 to 317; these read GMPNAGKS, FTTLA, DIPG, NKLD, and SAL. Residues Ser173 and Thr193 each coordinate Mg(2+).

Belongs to the TRAFAC class OBG-HflX-like GTPase superfamily. OBG GTPase family. In terms of assembly, monomer. Mg(2+) serves as cofactor.

It is found in the cytoplasm. An essential GTPase which binds GTP, GDP and possibly (p)ppGpp with moderate affinity, with high nucleotide exchange rates and a fairly low GTP hydrolysis rate. Plays a role in control of the cell cycle, stress response, ribosome biogenesis and in those bacteria that undergo differentiation, in morphogenesis control. The chain is GTPase Obg from Burkholderia thailandensis (strain ATCC 700388 / DSM 13276 / CCUG 48851 / CIP 106301 / E264).